The chain runs to 422 residues: UDP-N-acetylglucosamine 1-carboxyvinyltransferase (422 aa).

22–23 (KN) serves as a coordination point for phosphoenolpyruvate. UDP-N-acetyl-alpha-D-glucosamine is bound at residue R95. The active-site Proton donor is C119. 2-(S-cysteinyl)pyruvic acid O-phosphothioketal is present on C119. Residues 124–128 (RPIDQ), D309, and V331 contribute to the UDP-N-acetyl-alpha-D-glucosamine site.

It belongs to the EPSP synthase family. MurA subfamily.

Its subcellular location is the cytoplasm. It carries out the reaction phosphoenolpyruvate + UDP-N-acetyl-alpha-D-glucosamine = UDP-N-acetyl-3-O-(1-carboxyvinyl)-alpha-D-glucosamine + phosphate. It participates in cell wall biogenesis; peptidoglycan biosynthesis. Its function is as follows. Cell wall formation. Adds enolpyruvyl to UDP-N-acetylglucosamine. This chain is UDP-N-acetylglucosamine 1-carboxyvinyltransferase, found in Anaeromyxobacter dehalogenans (strain 2CP-C).